Here is a 607-residue protein sequence, read N- to C-terminus: ENTH domain-containing protein 1 (607 aa).

Positions 9 to 141 (NFVKNYSDAE…MDEPLLCKER (133 aa)) constitute an ENTH domain. Residues 543-574 (EAKNSISVLLREVKRAIARLHEDLSTVIQELN) adopt a coiled-coil conformation.

The polypeptide is ENTH domain-containing protein 1 (ENTHD1) (Homo sapiens (Human)).